We begin with the raw amino-acid sequence, 218 residues long: Glycerol-3-phosphate acyltransferase (218 aa).

5 helical membrane-spanning segments follow: residues 5 to 25 (ALGM…ILIC), 53 to 73 (LAAA…VWLA), 80 to 100 (PFYL…PVFF), 115 to 135 (IAAI…LTVL), and 138 to 158 (GYSS…VWWF).

It belongs to the PlsY family. In terms of assembly, probably interacts with PlsX.

It localises to the cell inner membrane. It catalyses the reaction an acyl phosphate + sn-glycerol 3-phosphate = a 1-acyl-sn-glycero-3-phosphate + phosphate. It participates in lipid metabolism; phospholipid metabolism. Its function is as follows. Catalyzes the transfer of an acyl group from acyl-phosphate (acyl-PO(4)) to glycerol-3-phosphate (G3P) to form lysophosphatidic acid (LPA). This enzyme utilizes acyl-phosphate as fatty acyl donor, but not acyl-CoA or acyl-ACP. This is Glycerol-3-phosphate acyltransferase from Proteus mirabilis (strain HI4320).